The following is a 164-amino-acid chain: 17.8 kDa class II heat shock protein (164 aa).

Positions 48 to 164 (DARAMAATPA…KPKTIEVKVA (117 aa)) constitute a sHSP domain.

It belongs to the small heat shock protein (HSP20) family.

It localises to the cytoplasm. The chain is 17.8 kDa class II heat shock protein from Zea mays (Maize).